Here is a 538-residue protein sequence, read N- to C-terminus: Bifunctional purine biosynthesis protein PurH (538 aa).

Residues 8 to 158 (IPAPDKVEIK…KNHAYVTILT (151 aa)) form the MGS-like domain.

It belongs to the PurH family.

It carries out the reaction (6R)-10-formyltetrahydrofolate + 5-amino-1-(5-phospho-beta-D-ribosyl)imidazole-4-carboxamide = 5-formamido-1-(5-phospho-D-ribosyl)imidazole-4-carboxamide + (6S)-5,6,7,8-tetrahydrofolate. The enzyme catalyses IMP + H2O = 5-formamido-1-(5-phospho-D-ribosyl)imidazole-4-carboxamide. It functions in the pathway purine metabolism; IMP biosynthesis via de novo pathway; 5-formamido-1-(5-phospho-D-ribosyl)imidazole-4-carboxamide from 5-amino-1-(5-phospho-D-ribosyl)imidazole-4-carboxamide (10-formyl THF route): step 1/1. The protein operates within purine metabolism; IMP biosynthesis via de novo pathway; IMP from 5-formamido-1-(5-phospho-D-ribosyl)imidazole-4-carboxamide: step 1/1. This Rhizobium leguminosarum bv. trifolii (strain WSM2304) protein is Bifunctional purine biosynthesis protein PurH.